The chain runs to 200 residues: Molybdenum cofactor guanylyltransferase (200 aa).

Residues 10 to 12, Lys-23, Asn-51, Asp-69, and Asp-99 each bind GTP; that span reads LAG. Asp-99 is a binding site for Mg(2+).

Belongs to the MobA family. In terms of assembly, monomer. Mg(2+) serves as cofactor.

The protein resides in the cytoplasm. The enzyme catalyses Mo-molybdopterin + GTP + H(+) = Mo-molybdopterin guanine dinucleotide + diphosphate. In terms of biological role, transfers a GMP moiety from GTP to Mo-molybdopterin (Mo-MPT) cofactor (Moco or molybdenum cofactor) to form Mo-molybdopterin guanine dinucleotide (Mo-MGD) cofactor. The polypeptide is Molybdenum cofactor guanylyltransferase (Shewanella halifaxensis (strain HAW-EB4)).